The sequence spans 213 residues: Uridine kinase (213 aa).

15 to 22 contacts ATP; the sequence is GASASGKS.

Belongs to the uridine kinase family.

The protein resides in the cytoplasm. The catalysed reaction is uridine + ATP = UMP + ADP + H(+). The enzyme catalyses cytidine + ATP = CMP + ADP + H(+). The protein operates within pyrimidine metabolism; CTP biosynthesis via salvage pathway; CTP from cytidine: step 1/3. It functions in the pathway pyrimidine metabolism; UMP biosynthesis via salvage pathway; UMP from uridine: step 1/1. In Salmonella newport (strain SL254), this protein is Uridine kinase.